The chain runs to 626 residues: 5'-AMP-activated protein kinase catalytic subunit alpha-2 (626 aa).

Residues 1–24 (MFSHQDRDRDRKEDGGGDGTEMKS) show a composition bias toward basic and acidic residues. The interval 1-77 (MFSHQDRDRD…GETSTKQQQE (77 aa)) is disordered. Residues 38–49 (NLSRKLSAKSRK) are compositionally biased toward basic residues. Residues 58-77 (DNSSKMSSPGGETSTKQQQE) show a composition bias toward polar residues. Positions 87–339 (YILKETLGVG…IKDVIAHEWF (253 aa)) constitute a Protein kinase domain. ATP contacts are provided by residues 93–101 (LGVGTFGKV) and K116. D210 functions as the Proton acceptor in the catalytic mechanism. A Phosphothreonine; by par-4 modification is found at T243. The interval 541–568 (SGSASASSSRHASMSMPQKPAGIRGTRT) is disordered. The span at 542-555 (GSASASSSRHASMS) shows a compositional bias: low complexity.

Belongs to the protein kinase superfamily. CAMK Ser/Thr protein kinase family. SNF1 subfamily. Tetramer, composed of 2 regulatory (R) and 2 catalytic (C) subunits. In the presence of cAMP it dissociates into 2 active monomeric C subunits and an R dimer that binds four cAMP molecules. Post-translationally, phosphorylated on Thr-243 in response to oxidative stress and during dauer development. Phosphorylation at Thr-243 is increased in response to sodium azide or the AMP analog AICAR (5-amino-1-(5-phospho-beta-D-ribosyl)imidazole-4-carboxamide). Expressed in the pharynx, the ventral cord, neurons including the hermaphrodite-specific neuron, body wall muscles, the vulva, the excretory canal, and weakly in the intestine.

It carries out the reaction L-seryl-[protein] + ATP = O-phospho-L-seryl-[protein] + ADP + H(+). The enzyme catalyses L-threonyl-[protein] + ATP = O-phospho-L-threonyl-[protein] + ADP + H(+). Activated by phosphorylation. In terms of biological role, acts as a sensor that couples lifespan to information about energy levels and insulin-like signals. Role in motility and response to oxidative stress. Involved in the establishment of germline stem cell (GSC) quiescence during dauer development. Plays a role in axon regrowth after axotomy in PLM neurons. Plays a role in the maintenance of glycogen stores which are necessary for resistance to hyperosmotic stress. Plays a role in the regulation of flp-7 secretion from ASI neurons. Keeps the CREB-regulated transcription coactivator 1 homolog crtc-1 inactive which in turn inhibits flp-7 secretion. Following serotonin signaling, derepresses crtc-1 which stimulates flp-7 secretion and subsequent body fat loss. The polypeptide is 5'-AMP-activated protein kinase catalytic subunit alpha-2 (Caenorhabditis elegans).